Reading from the N-terminus, the 918-residue chain is Isoleucine--tRNA ligase 1 (918 aa).

Positions 57–67 (PYANGDIHIGH) match the 'HIGH' region motif. Glu-553 provides a ligand contact to L-isoleucyl-5'-AMP. A 'KMSKS' region motif is present at residues 594 to 598 (KMSKS). Lys-597 provides a ligand contact to ATP. Zn(2+)-binding residues include Cys-885, Cys-888, Cys-905, and Cys-908.

This sequence belongs to the class-I aminoacyl-tRNA synthetase family. IleS type 1 subfamily. In terms of assembly, monomer. It depends on Zn(2+) as a cofactor.

It localises to the cytoplasm. It carries out the reaction tRNA(Ile) + L-isoleucine + ATP = L-isoleucyl-tRNA(Ile) + AMP + diphosphate. Catalyzes the attachment of isoleucine to tRNA(Ile). As IleRS can inadvertently accommodate and process structurally similar amino acids such as valine, to avoid such errors it has two additional distinct tRNA(Ile)-dependent editing activities. One activity is designated as 'pretransfer' editing and involves the hydrolysis of activated Val-AMP. The other activity is designated 'posttransfer' editing and involves deacylation of mischarged Val-tRNA(Ile). This chain is Isoleucine--tRNA ligase 1, found in Oceanobacillus iheyensis (strain DSM 14371 / CIP 107618 / JCM 11309 / KCTC 3954 / HTE831).